We begin with the raw amino-acid sequence, 400 residues long: Transposase for insertion sequence element ISRM3 (400 aa).

It belongs to the transposase mutator family.

Required for the transposition of the insertion element. The sequence is that of Transposase for insertion sequence element ISRM3 from Rhizobium meliloti (strain 1021) (Ensifer meliloti).